The sequence spans 464 residues: Fumarate hydratase class II (464 aa).

Residues 98–100 (SGT), 129–132 (HPND), 139–141 (SSN), and Thr187 contribute to the substrate site. His188 acts as the Proton donor/acceptor in catalysis. Ser318 is a catalytic residue. Residues Ser319 and 324-326 (KVN) each bind substrate.

It belongs to the class-II fumarase/aspartase family. Fumarase subfamily. In terms of assembly, homotetramer.

It is found in the cytoplasm. It carries out the reaction (S)-malate = fumarate + H2O. It functions in the pathway carbohydrate metabolism; tricarboxylic acid cycle; (S)-malate from fumarate: step 1/1. In terms of biological role, involved in the TCA cycle. Catalyzes the stereospecific interconversion of fumarate to L-malate. This is Fumarate hydratase class II from Haemophilus ducreyi (strain 35000HP / ATCC 700724).